The chain runs to 375 residues: Probable G-protein coupled receptor 27 (375 aa).

Residues 1-23 (MANASEPGGSGGGEAAALGLKLA) lie on the Extracellular side of the membrane. Asn3 is a glycosylation site (N-linked (GlcNAc...) asparagine). A helical transmembrane segment spans residues 24–44 (TLSLLLCVSLAGNVLFALLIV). Residues 45 to 55 (RERSLHRAPYY) lie on the Cytoplasmic side of the membrane. A helical transmembrane segment spans residues 56–76 (LLLDLCLADGLRALACLPAVM). Over 77 to 97 (LAARRAAAAAGAPPGALGCKL) the chain is Extracellular. A disulfide bridge links Cys95 with Cys171. A helical membrane pass occupies residues 98–118 (LAFLAALFCFHAAFLLLGVGV). The Cytoplasmic segment spans residues 119–139 (TRYLAIAHHRFYAERLAGWPC). A helical membrane pass occupies residues 140–160 (AAMLVCAAWALALAAAFPPVL). The Extracellular segment spans residues 161-181 (DGGGDDEDAPCALEQRPDGAP). Residues 182 to 202 (GALGFLLLLAVVVGATHLVYL) traverse the membrane as a helical segment. Over 203-285 (RLLFFIHDRR…FKTEKRLCKM (83 aa)) the chain is Cytoplasmic. A helical membrane pass occupies residues 286-306 (FYAVTLLFLLLWGPYVVASYL). Over 307-320 (RVLVRPGAVPQAYL) the chain is Extracellular. Residues 321 to 341 (TASVWLTFAQAGINPVVCFLF) form a helical membrane-spanning segment. The Cytoplasmic segment spans residues 342–375 (NRELRDCFRAQFPCCQSPRTTQATHPCDLKGIGL).

The protein belongs to the G-protein coupled receptor 1 family. As to expression, highly expressed as a 3.0 kb transcript in brain, ovary, testis, heart, prostate and peripheral Leukocytes. Lower levels in pancreas and small intestine. A 2.3 kb transcript was also found in peripheral Leukocytes. In brain regions, detected as a 3.0 kb transcript in all regions tested. Highest levels in the caudate nucleus, putamen, hippocampus and subthalamic nucleus. Lowest level in the cerebellum.

Its subcellular location is the cell membrane. Its function is as follows. Orphan receptor. Possible candidate for amine-like G-protein coupled receptor. The protein is Probable G-protein coupled receptor 27 (GPR27) of Homo sapiens (Human).